Reading from the N-terminus, the 417-residue chain is Serine hydroxymethyltransferase (417 aa).

(6S)-5,6,7,8-tetrahydrofolate contacts are provided by residues Leu112 and 116–118; that span reads GHL. Lys221 is modified (N6-(pyridoxal phosphate)lysine). Glu247 is a binding site for (6S)-5,6,7,8-tetrahydrofolate.

Belongs to the SHMT family. Homodimer. It depends on pyridoxal 5'-phosphate as a cofactor.

The protein resides in the cytoplasm. The enzyme catalyses (6R)-5,10-methylene-5,6,7,8-tetrahydrofolate + glycine + H2O = (6S)-5,6,7,8-tetrahydrofolate + L-serine. The protein operates within one-carbon metabolism; tetrahydrofolate interconversion. Its pathway is amino-acid biosynthesis; glycine biosynthesis; glycine from L-serine: step 1/1. Functionally, catalyzes the reversible interconversion of serine and glycine with tetrahydrofolate (THF) serving as the one-carbon carrier. This reaction serves as the major source of one-carbon groups required for the biosynthesis of purines, thymidylate, methionine, and other important biomolecules. Also exhibits THF-independent aldolase activity toward beta-hydroxyamino acids, producing glycine and aldehydes, via a retro-aldol mechanism. The polypeptide is Serine hydroxymethyltransferase (Borrelia hermsii (strain HS1 / DAH)).